The following is a 340-amino-acid chain: Phosphate acyltransferase (340 aa).

The protein belongs to the PlsX family. Homodimer. Probably interacts with PlsY.

Its subcellular location is the cytoplasm. The enzyme catalyses a fatty acyl-[ACP] + phosphate = an acyl phosphate + holo-[ACP]. It participates in lipid metabolism; phospholipid metabolism. Functionally, catalyzes the reversible formation of acyl-phosphate (acyl-PO(4)) from acyl-[acyl-carrier-protein] (acyl-ACP). This enzyme utilizes acyl-ACP as fatty acyl donor, but not acyl-CoA. This is Phosphate acyltransferase from Trichodesmium erythraeum (strain IMS101).